Reading from the N-terminus, the 332-residue chain is Ribose-phosphate pyrophosphokinase (332 aa).

Residues 43–45 and 102–103 each bind ATP; these read DGE and RQ. Mg(2+)-binding residues include histidine 136 and aspartate 176. Lysine 199 is a catalytic residue. D-ribose 5-phosphate-binding positions include arginine 201, aspartate 225, and 229 to 233; that span reads DTGGT.

The protein belongs to the ribose-phosphate pyrophosphokinase family. Class I subfamily. As to quaternary structure, homohexamer. Mg(2+) serves as cofactor.

It localises to the cytoplasm. The catalysed reaction is D-ribose 5-phosphate + ATP = 5-phospho-alpha-D-ribose 1-diphosphate + AMP + H(+). The protein operates within metabolic intermediate biosynthesis; 5-phospho-alpha-D-ribose 1-diphosphate biosynthesis; 5-phospho-alpha-D-ribose 1-diphosphate from D-ribose 5-phosphate (route I): step 1/1. In terms of biological role, involved in the biosynthesis of the central metabolite phospho-alpha-D-ribosyl-1-pyrophosphate (PRPP) via the transfer of pyrophosphoryl group from ATP to 1-hydroxyl of ribose-5-phosphate (Rib-5-P). In Mycoplasma genitalium (strain ATCC 33530 / DSM 19775 / NCTC 10195 / G37) (Mycoplasmoides genitalium), this protein is Ribose-phosphate pyrophosphokinase.